A 188-amino-acid polypeptide reads, in one-letter code: Probable nicotinate-nucleotide adenylyltransferase (188 aa).

The protein belongs to the NadD family.

The catalysed reaction is nicotinate beta-D-ribonucleotide + ATP + H(+) = deamido-NAD(+) + diphosphate. The protein operates within cofactor biosynthesis; NAD(+) biosynthesis; deamido-NAD(+) from nicotinate D-ribonucleotide: step 1/1. Catalyzes the reversible adenylation of nicotinate mononucleotide (NaMN) to nicotinic acid adenine dinucleotide (NaAD). This is Probable nicotinate-nucleotide adenylyltransferase from Rhizobium meliloti (strain 1021) (Ensifer meliloti).